A 192-amino-acid polypeptide reads, in one-letter code: Ribosome maturation factor RimM (192 aa).

Positions 116 to 192 (PGEYYWVDLI…RIIVDWQPDY (77 aa)) constitute a PRC barrel domain.

This sequence belongs to the RimM family. Binds ribosomal protein uS19.

Its subcellular location is the cytoplasm. In terms of biological role, an accessory protein needed during the final step in the assembly of 30S ribosomal subunit, possibly for assembly of the head region. Essential for efficient processing of 16S rRNA. May be needed both before and after RbfA during the maturation of 16S rRNA. It has affinity for free ribosomal 30S subunits but not for 70S ribosomes. The polypeptide is Ribosome maturation factor RimM (Verminephrobacter eiseniae (strain EF01-2)).